The primary structure comprises 153 residues: Aspartate carbamoyltransferase regulatory chain (153 aa).

Cys-109, Cys-114, Cys-138, and Cys-141 together coordinate Zn(2+).

It belongs to the PyrI family. Contains catalytic and regulatory chains. Zn(2+) is required as a cofactor.

In terms of biological role, involved in allosteric regulation of aspartate carbamoyltransferase. The polypeptide is Aspartate carbamoyltransferase regulatory chain (Escherichia coli O7:K1 (strain IAI39 / ExPEC)).